The primary structure comprises 310 residues: Mitochondrial thiamine pyrophosphate carrier 1 (310 aa).

6 consecutive transmembrane segments (helical) span residues 16–32, 88–104, 117–141, 173–197, 218–234, and 274–291; these read VSPY…GGVA, ILYV…YSAL, IVMP…LTTY, GISG…LMFW, ICGF…TFPL, and GYGV…ISLW. 3 Solcar repeats span residues 16–107, 120–205, and 211–299; these read VSPY…LSKS, PSSV…AREF, and HVPF…VISA.

Belongs to the mitochondrial carrier (TC 2.A.29) family.

The protein resides in the mitochondrion inner membrane. Its function is as follows. Mitochondrial transporter that mediates uptake of thiamine pyrophosphate (ThPP) into mitochondria. The protein is Mitochondrial thiamine pyrophosphate carrier 1 (TPC1) of Lodderomyces elongisporus (strain ATCC 11503 / CBS 2605 / JCM 1781 / NBRC 1676 / NRRL YB-4239) (Yeast).